The chain runs to 29 residues: Cyclotide psyleio D (29 aa).

A cross-link (cyclopeptide (Gly-Asp)) is located at residues 1–29 (GLPVCGESCFGGTCNTPGCSCTWPVCTRD). Cystine bridges form between Cys-5/Cys-19, Cys-9/Cys-21, and Cys-14/Cys-26.

In terms of processing, this is a cyclic peptide.

Functionally, probably participates in a plant defense mechanism. The sequence is that of Cyclotide psyleio D from Psychotria brachyceras.